A 350-amino-acid chain; its full sequence is Pleckstrin (350 aa).

Residues Lys-4–Lys-101 enclose the PH 1 domain. The residue at position 64 (Lys-64) is an N6-acetyllysine. 2 positions are modified to phosphoserine; by PKC: Ser-113 and Ser-117. The region spanning Thr-136–Asp-221 is the DEP domain. Positions Val-244–Arg-347 constitute a PH 2 domain.

Major protein kinase C substrate of platelets. The polypeptide is Pleckstrin (PLEK) (Homo sapiens (Human)).